The chain runs to 1758 residues: Y' element ATP-dependent helicase YIL177C (1758 aa).

One can recognise a Helicase ATP-binding domain in the interval glutamate 668–alanine 845. Position 681–688 (alanine 681–threonine 688) interacts with ATP. One can recognise a Helicase C-terminal domain in the interval alanine 900–glycine 1051. The segment covering asparagine 1142 to serine 1360 has biased composition (low complexity). Residues asparagine 1142–lysine 1384 form a disordered region. Residues alanine 1361–lysine 1384 show a composition bias toward basic and acidic residues.

This sequence belongs to the helicase family. Yeast subtelomeric Y' repeat subfamily.

Catalyzes DNA unwinding and is involved in telomerase-independent telomere maintenance. This is Y' element ATP-dependent helicase YIL177C from Saccharomyces cerevisiae (strain ATCC 204508 / S288c) (Baker's yeast).